The sequence spans 364 residues: Histidinol-phosphate aminotransferase (364 aa).

Lys226 bears the N6-(pyridoxal phosphate)lysine mark.

This sequence belongs to the class-II pyridoxal-phosphate-dependent aminotransferase family. Histidinol-phosphate aminotransferase subfamily. In terms of assembly, homodimer. Pyridoxal 5'-phosphate is required as a cofactor.

It catalyses the reaction L-histidinol phosphate + 2-oxoglutarate = 3-(imidazol-4-yl)-2-oxopropyl phosphate + L-glutamate. It participates in amino-acid biosynthesis; L-histidine biosynthesis; L-histidine from 5-phospho-alpha-D-ribose 1-diphosphate: step 7/9. This is Histidinol-phosphate aminotransferase from Campylobacter jejuni subsp. doylei (strain ATCC BAA-1458 / RM4099 / 269.97).